The following is a 313-amino-acid chain: Transcription factor MafB (313 aa).

Disordered regions lie at residues 51–77 and 151–197; these read QPTG…FSPT and MGLP…VEDR. Low complexity predominate over residues 55-76; sequence SVSSTPISTPCSSVPSSPSFSP. Basic residues predominate over residues 154-166; it reads PHHHPHHHQHQHH. A compositionally biased stretch (low complexity) spans 167–192; sequence QTSPSPSGSSSSSQQLHHQQQHSSSS. The segment at 225-250 is basic motif; the sequence is RLKQKRRTLKNRGYAQSCRYKRVQQK. Residues 225 to 288 form the bZIP domain; the sequence is RLKQKRRTLK…DAYKIKCEKL (64 aa). Residues 253 to 274 are leucine-zipper; sequence LEGEKTQLVQQVEQLKQEVSRL. The tract at residues 292 to 313 is disordered; that stretch reads NSSNFREAGSTSDNPSSPEFFM.

It belongs to the bZIP family. Maf subfamily. Homodimer or heterodimer with other bHLH-Zip transcription factors. Binds DNA as a homodimer or a heterodimer.

The protein resides in the nucleus. Its function is as follows. Acts as a transcriptional activator or repressor. Implicated in the regulation of cell-type specific gene expression and play a role in inductive events during lens development. The sequence is that of Transcription factor MafB (mafb) from Xenopus laevis (African clawed frog).